A 522-amino-acid chain; its full sequence is Glutamate--cysteine ligase (522 aa).

Belongs to the glutamate--cysteine ligase type 1 family. Type 1 subfamily.

It carries out the reaction L-cysteine + L-glutamate + ATP = gamma-L-glutamyl-L-cysteine + ADP + phosphate + H(+). The protein operates within sulfur metabolism; glutathione biosynthesis; glutathione from L-cysteine and L-glutamate: step 1/2. The sequence is that of Glutamate--cysteine ligase from Vibrio campbellii (strain ATCC BAA-1116).